Here is a 157-residue protein sequence, read N- to C-terminus: Transmembrane protein 50A (157 aa).

An N-acetylserine modification is found at serine 2. Phosphoserine is present on serine 2. 4 helical membrane-spanning segments follow: residues 26-46 (IAAG…AVIY), 58-78 (ACGV…NGQV), 95-115 (IWLF…MWIL), and 126-146 (IVYP…GGLV).

The protein belongs to the UPF0220 family.

The protein resides in the membrane. The polypeptide is Transmembrane protein 50A (TMEM50A) (Homo sapiens (Human)).